Reading from the N-terminus, the 327-residue chain is MTGHEDRVWSVAWSPNGFVLASCGGDKTIRIWGKEGDKWICKTILEDGHQRTIRSLGWSPCGTFLASASFDATTCIWDQKSGEFECNATLEGHENEVKSVDWSVSGSLLATCGRDKSVWIWEVQEDDEYECASVIHSHTQDVKKVVWHPTKEILASCSYDDTIKLYKEDEDDWSCCDTLEGHESTVWSISFDGSGDRIVSCSDDKTVRIWKSYPPGNQEGVVVSGKHTKWKCVCVLSGYHDRTIYDVHWSKVSGLIATASGDDCIRIFKEDTNSDRNQPSFQLVATQRKAHSMDVNSICWHPKDENILATCSDDGTVKLWRFTPAEE.

7 WD repeats span residues 3–42, 48–87, 92–131, 137–176, 181–220, 239–278, and 290–327; these read GHED…WICK, GHQR…FECN, GHEN…EYEC, SHTQ…WSCC, GHES…NQEG, YHDR…DRNQ, and AHSM…PAEE.

This sequence belongs to the WD repeat CIA1 family.

Essential component of the cytosolic iron-sulfur (Fe/S) protein assembly machinery. Required for the maturation of extramitochondrial Fe/S proteins. The chain is Probable cytosolic iron-sulfur protein assembly protein CIAO1 homolog from Nematostella vectensis (Starlet sea anemone).